The following is a 165-amino-acid chain: 16S rRNA aminocarboxypropyltransferase (165 aa).

Residues Thr-17, Leu-62, Leu-83, and Thr-102 each contribute to the S-adenosyl-L-methionine site.

The protein belongs to the TDD superfamily. TSR3 family.

The protein localises to the cytoplasm. The catalysed reaction is an N(1)-methylpseudouridine in rRNA + S-adenosyl-L-methionine = N(1)-methyl-N(3)-[(3S)-3-amino-3-carboxypropyl]pseudouridine in rRNA + S-methyl-5'-thioadenosine + H(+). Functionally, aminocarboxypropyltransferase that catalyzes the aminocarboxypropyl transfer on pseudouridine corresponding to position 914 in M.jannaschii 16S rRNA. It constitutes the last step in biosynthesis of the hypermodified N1-methyl-N3-(3-amino-3-carboxypropyl) pseudouridine (m1acp3-Psi). In Halobacterium salinarum (strain ATCC 700922 / JCM 11081 / NRC-1) (Halobacterium halobium), this protein is 16S rRNA aminocarboxypropyltransferase.